The primary structure comprises 198 residues: Probable GTP-binding protein EngB (198 aa).

The EngB-type G domain maps to N21–G195. GTP-binding positions include G29–S36, G56–L60, D81–G84, T151–D154, and V174–N176. Residues S36 and T58 each contribute to the Mg(2+) site.

This sequence belongs to the TRAFAC class TrmE-Era-EngA-EngB-Septin-like GTPase superfamily. EngB GTPase family. The cofactor is Mg(2+).

In terms of biological role, necessary for normal cell division and for the maintenance of normal septation. The polypeptide is Probable GTP-binding protein EngB (Campylobacter jejuni (strain RM1221)).